The sequence spans 589 residues: Cell fusion protein aff-1 (589 aa).

The signal sequence occupies residues methionine 1 to alanine 20. Residues arginine 21–tryptophan 537 are Extracellular-facing. Asparagine 58, asparagine 138, asparagine 205, asparagine 335, asparagine 382, asparagine 392, and asparagine 408 each carry an N-linked (GlcNAc...) asparagine glycan. A helical membrane pass occupies residues leucine 538 to phenylalanine 558. At threonine 559–tyrosine 589 the chain is on the cytoplasmic side.

The protein belongs to the EFF/AFF cell fusogen family. As to expression, expressed in amphid sheath cells.

The protein localises to the cell membrane. It localises to the apical cell membrane. Required for cell fusion events during development including the fusion of anchor cells (AC), vulval A and vulval D rings, and late epidermal seam cells. Required for amphid sheath cell fusion induced by entry into dauer stage. This chain is Cell fusion protein aff-1, found in Caenorhabditis elegans.